A 246-amino-acid chain; its full sequence is Large ribosomal subunit protein uL30 (246 aa).

It belongs to the universal ribosomal protein uL30 family.

Binds to G-rich structures in 28S rRNA and in mRNAs. Plays a regulatory role in the translation apparatus; inhibits cell-free translation of mRNAs. In Dictyostelium discoideum (Social amoeba), this protein is Large ribosomal subunit protein uL30 (rpl7).